The primary structure comprises 237 residues: Lectin alpha chain (237 aa).

Residues Glu8 and Asp10 each contribute to the Mn(2+) site. 4 residues coordinate Ca(2+): Asp10, Tyr12, Asn14, and Asp19. An a carbohydrate-binding site is contributed by Tyr12. Residues Asp19 and His24 each contribute to the Mn(2+) site. An a carbohydrate-binding site is contributed by 99–100; sequence LY. Asp208 is a Ca(2+) binding site. Position 228 (Arg228) interacts with a carbohydrate.

It belongs to the leguminous lectin family. In terms of assembly, homotetramer. In terms of processing, the beta and gamma chains are produced by partial proteolytic processing of the lectin alpha chain by an asparaginyl endopeptidase.

It localises to the vacuole. The protein localises to the aleurone grain. Its function is as follows. D-mannose/D-glucose-binding lectin with hemagglutinating activity towards rabbit and human erythrocytes. In rats, elicits an acute inflammatory response by inducing neutrophil migration and induces dose-dependent paw edema. The polypeptide is Lectin alpha chain (Macropsychanthus wilsonii (Wilson's clusterpea)).